We begin with the raw amino-acid sequence, 398 residues long: Tryptophan synthase beta chain (398 aa).

K88 is subject to N6-(pyridoxal phosphate)lysine.

This sequence belongs to the TrpB family. In terms of assembly, tetramer of two alpha and two beta chains. Pyridoxal 5'-phosphate is required as a cofactor.

The catalysed reaction is (1S,2R)-1-C-(indol-3-yl)glycerol 3-phosphate + L-serine = D-glyceraldehyde 3-phosphate + L-tryptophan + H2O. It functions in the pathway amino-acid biosynthesis; L-tryptophan biosynthesis; L-tryptophan from chorismate: step 5/5. Its function is as follows. The beta subunit is responsible for the synthesis of L-tryptophan from indole and L-serine. This Histophilus somni (strain 2336) (Haemophilus somnus) protein is Tryptophan synthase beta chain.